Consider the following 315-residue polypeptide: MSQSLRIVFAGTPDFAARHLAALLSSEHEIIAVYTQPERPAGRGKKLTASPVKTLALEHNVPVYQPENFKSDESKQQLAALNADLMVVVAYGLLLPKVVLDTPKLGCINVHGSILPRWRGAAPIQRSIWAGDSETGVTIMQMDVGLDTGDMLKIATLPIEASDTSASMYDKLAELGPQALLECLQDIAQGTAVAVKQDDGLANYAHKLSKEEARINWSDAATHIERCIRAFNPWPMSHFEVAENSIKVWQARVETRAVTQTPGTIIQADKSGIYVATGQDVLVLESLQIPGKKALPVQDILNARADWFSVGSQLS.

113–116 (SILP) contacts (6S)-5,6,7,8-tetrahydrofolate.

It belongs to the Fmt family.

The catalysed reaction is L-methionyl-tRNA(fMet) + (6R)-10-formyltetrahydrofolate = N-formyl-L-methionyl-tRNA(fMet) + (6S)-5,6,7,8-tetrahydrofolate + H(+). In terms of biological role, attaches a formyl group to the free amino group of methionyl-tRNA(fMet). The formyl group appears to play a dual role in the initiator identity of N-formylmethionyl-tRNA by promoting its recognition by IF2 and preventing the misappropriation of this tRNA by the elongation apparatus. The protein is Methionyl-tRNA formyltransferase of Vibrio cholerae serotype O1 (strain ATCC 39541 / Classical Ogawa 395 / O395).